The following is a 436-amino-acid chain: ATP-dependent protease ATPase subunit HslU (436 aa).

Residues I18, G60–E65, D250, E314, and R386 contribute to the ATP site.

The protein belongs to the ClpX chaperone family. HslU subfamily. In terms of assembly, a double ring-shaped homohexamer of HslV is capped on each side by a ring-shaped HslU homohexamer. The assembly of the HslU/HslV complex is dependent on binding of ATP.

Its subcellular location is the cytoplasm. In terms of biological role, ATPase subunit of a proteasome-like degradation complex; this subunit has chaperone activity. The binding of ATP and its subsequent hydrolysis by HslU are essential for unfolding of protein substrates subsequently hydrolyzed by HslV. HslU recognizes the N-terminal part of its protein substrates and unfolds these before they are guided to HslV for hydrolysis. The chain is ATP-dependent protease ATPase subunit HslU from Mesorhizobium japonicum (strain LMG 29417 / CECT 9101 / MAFF 303099) (Mesorhizobium loti (strain MAFF 303099)).